Reading from the N-terminus, the 155-residue chain is UPF0266 membrane protein LMHCC_1856 (155 aa).

Transmembrane regions (helical) follow at residues 8-28, 46-66, and 70-90; these read IFLF…DAVI, RWDG…NTFF, and PFST…ICFF.

The protein belongs to the UPF0266 family.

Its subcellular location is the cell membrane. This is UPF0266 membrane protein LMHCC_1856 from Listeria monocytogenes serotype 4a (strain HCC23).